We begin with the raw amino-acid sequence, 204 residues long: Calexcitin-1 (204 aa).

3 consecutive EF-hand domains span residues 25 to 61 (FLVK…VRDI), 75 to 110 (SLAA…TDAK), and 115 to 150 (WFKD…YGFD). The Ca(2+) site is built by Asp-39, Asn-41, Ser-43, Gln-45, Asp-50, Asp-88, Asp-90, Asp-92, Glu-99, Asp-128, Ser-130, Asp-132, and Glu-139.

This is Calexcitin-1 (cex-1) from Caenorhabditis elegans.